An 886-amino-acid chain; its full sequence is Microsomal triglyceride transfer protein (886 aa).

An N-terminal signal peptide occupies residues 1 to 24 (MLRLAGLLLCVTSFLSTSSLGANA). One can recognise a Vitellogenin domain in the interval 28–662 (LDNDRLYRYS…QSNNALLHGL (635 aa)). 2 cysteine pairs are disulfide-bonded: Cys174-Cys194 and Cys440-Cys445.

As to quaternary structure, heterodimer; heterodimerizes with the protein disulfide isomerase. Interacts with apolipoprotein B.

The protein resides in the endoplasmic reticulum. Catalyzes the transport of triglyceride, cholesteryl ester, and phospholipid between phospholipid surfaces. Required for the secretion of plasma lipoproteins that contain apolipoprotein B. The chain is Microsomal triglyceride transfer protein from Megalobrama amblycephala (Chinese blunt snout bream).